A 239-amino-acid polypeptide reads, in one-letter code: Pyridoxine 5'-phosphate synthase (239 aa).

Asparagine 7 is a binding site for 3-amino-2-oxopropyl phosphate. 9–10 (DH) contacts 1-deoxy-D-xylulose 5-phosphate. Arginine 18 contributes to the 3-amino-2-oxopropyl phosphate binding site. The active-site Proton acceptor is the histidine 43. 1-deoxy-D-xylulose 5-phosphate contacts are provided by arginine 45 and histidine 50. Glutamate 70 serves as the catalytic Proton acceptor. Threonine 100 is a 1-deoxy-D-xylulose 5-phosphate binding site. The active-site Proton donor is histidine 191. Residues glycine 192 and 213 to 214 (GH) each bind 3-amino-2-oxopropyl phosphate.

It belongs to the PNP synthase family. As to quaternary structure, homooctamer; tetramer of dimers.

The protein localises to the cytoplasm. It catalyses the reaction 3-amino-2-oxopropyl phosphate + 1-deoxy-D-xylulose 5-phosphate = pyridoxine 5'-phosphate + phosphate + 2 H2O + H(+). It participates in cofactor biosynthesis; pyridoxine 5'-phosphate biosynthesis; pyridoxine 5'-phosphate from D-erythrose 4-phosphate: step 5/5. Its function is as follows. Catalyzes the complicated ring closure reaction between the two acyclic compounds 1-deoxy-D-xylulose-5-phosphate (DXP) and 3-amino-2-oxopropyl phosphate (1-amino-acetone-3-phosphate or AAP) to form pyridoxine 5'-phosphate (PNP) and inorganic phosphate. In Pelobacter propionicus (strain DSM 2379 / NBRC 103807 / OttBd1), this protein is Pyridoxine 5'-phosphate synthase.